A 73-amino-acid polypeptide reads, in one-letter code: Large ribosomal subunit protein bL31 (73 aa).

C16, C18, C36, and C39 together coordinate Zn(2+).

Belongs to the bacterial ribosomal protein bL31 family. Type A subfamily. In terms of assembly, part of the 50S ribosomal subunit. It depends on Zn(2+) as a cofactor.

Its function is as follows. Binds the 23S rRNA. This is Large ribosomal subunit protein bL31 from Myxococcus xanthus (strain DK1622).